A 362-amino-acid polypeptide reads, in one-letter code: Dihydroorotate dehydrogenase (quinone) (362 aa).

Residues 62–66 and threonine 86 contribute to the FMN site; that span reads AGYDK. Lysine 66 is a substrate binding site. 111-115 contributes to the substrate binding site; it reads NRLGF. 2 residues coordinate FMN: asparagine 139 and asparagine 170. Asparagine 170 contacts substrate. Catalysis depends on serine 173, which acts as the Nucleophile. Asparagine 175 is a binding site for substrate. Residues lysine 215 and serine 243 each contribute to the FMN site. 244-245 is a substrate binding site; the sequence is NT. FMN is bound by residues glycine 266, glycine 295, and 316–317; that span reads YS.

The protein belongs to the dihydroorotate dehydrogenase family. Type 2 subfamily. As to quaternary structure, monomer. The cofactor is FMN.

The protein resides in the cell membrane. It catalyses the reaction (S)-dihydroorotate + a quinone = orotate + a quinol. Its pathway is pyrimidine metabolism; UMP biosynthesis via de novo pathway; orotate from (S)-dihydroorotate (quinone route): step 1/1. Functionally, catalyzes the conversion of dihydroorotate to orotate with quinone as electron acceptor. This Rhizobium leguminosarum bv. trifolii (strain WSM2304) protein is Dihydroorotate dehydrogenase (quinone).